Reading from the N-terminus, the 194-residue chain is E3 ubiquitin-protein ligase RNF185 (194 aa).

Residues 1 to 27 (MASAAASESSSSSSSSSAGAANGQSAG) are compositionally biased toward low complexity. Residues 1–32 (MASAAASESSSSSSSSSAGAANGQSAGESGGG) are disordered. Residues 31–82 (GGGAQDSTFECNICLDTSKDAVISLCGHLFCWPCLHQWLETRPNRQVCPVCK) are required for ubiquitin ligase activity and protection against ER stress-induced cell death. The RING-type zinc finger occupies 41–82 (CNICLDTSKDAVISLCGHLFCWPCLHQWLETRPNRQVCPVCK). The segment at 92-126 (PLYGRGSTGQQDPREKTPPRPQGQRPEPENRGGFQ) is disordered. Transmembrane regions (helical) follow at residues 133 to 153 (GGFQMSFGIGAFPFGIFATAF) and 174 to 194 (QFLSRLFLFVALLIMFWLLIA).

The protein localises to the mitochondrion outer membrane. It is found in the endoplasmic reticulum membrane. It carries out the reaction S-ubiquitinyl-[E2 ubiquitin-conjugating enzyme]-L-cysteine + [acceptor protein]-L-lysine = [E2 ubiquitin-conjugating enzyme]-L-cysteine + N(6)-ubiquitinyl-[acceptor protein]-L-lysine.. It functions in the pathway protein modification; protein ubiquitination. E3 ubiquitin-protein ligase that regulates selective mitochondrial autophagy by mediating 'Lys-63'-linked polyubiquitination. Acts in the endoplasmic reticulum (ER)-associated degradation (ERAD) pathway, which targets misfolded proteins that accumulate in the endoplasmic reticulum (ER) for ubiquitination and subsequent proteasome-mediated degradation. Protects cells from ER stress-induced apoptosis. Responsible for the cotranslational ubiquitination and degradation of CFTR in the ERAD pathway. Also acts as a regulator of the innate antiviral response by catalyzing 'Lys-27'-linked polyubiquitination of CGAS, thereby promoting CGAS cyclic GMP-AMP synthase activity. Preferentially associates with the E2 enzymes UBE2J1 and UBE2J2. The sequence is that of E3 ubiquitin-protein ligase RNF185 (rnf185) from Danio rerio (Zebrafish).